The sequence spans 399 residues: Aspartate aminotransferase (399 aa).

L-aspartate contacts are provided by glycine 42 and asparagine 179. Residue lysine 240 is modified to N6-(pyridoxal phosphate)lysine. Arginine 372 is an L-aspartate binding site.

It belongs to the class-I pyridoxal-phosphate-dependent aminotransferase family. As to quaternary structure, homodimer. Pyridoxal 5'-phosphate serves as cofactor.

It localises to the cytoplasm. It catalyses the reaction L-aspartate + 2-oxoglutarate = oxaloacetate + L-glutamate. In Sulfurisphaera tokodaii (strain DSM 16993 / JCM 10545 / NBRC 100140 / 7) (Sulfolobus tokodaii), this protein is Aspartate aminotransferase (aspC).